We begin with the raw amino-acid sequence, 520 residues long: Cyclin-L2 (520 aa).

Cyclin-like stretches follow at residues 81 to 183 and 196 to 280; these read ELIQ…RVLK and KIIV…KILQ. The interval 309 to 520 is disordered; that stretch reads RAKGLLPPGS…DHPGHSRHRR (212 aa). Ser330, Ser337, Ser347, and Ser350 each carry phosphoserine. Residues 356–366 are compositionally biased toward basic and acidic residues; it reads RKMEGPKKAKG. Residue Ser368 is modified to Phosphoserine. The interval 384-422 is RS; it reads RSREQSYSRSPSRSASPKRRKSDSGSTSGGSKSQSRSRS. Positions 407–429 are enriched in low complexity; that stretch reads SGSTSGGSKSQSRSRSRSDSPPR. Residues 440 to 453 are compositionally biased toward basic and acidic residues; that stretch reads SEVRGSRKSKDCKH. Residues 454–471 show a composition bias toward basic residues; it reads LTQKPHKSRSRSSSRSRS. 2 stretches are compositionally biased toward basic and acidic residues: residues 472 to 481 and 489 to 514; these read RSRERTDSSG and YYRD…DHPG.

This sequence belongs to the cyclin family. Cyclin L subfamily. In terms of assembly, interacts with CDK11A, CDK11B, CDK12, CDK13 and POLR2A, the hyperphosphorylated C-terminal domain (CTD) of RNA polymerase II. May form a ternary complex with CDK11B and casein kinase II (CKII). Interacts with pre-mRNA-splicing factors, including at least SRSF1, SRSF2 and SRSF7/SLU7.

It localises to the nucleus speckle. Its subcellular location is the nucleus. The protein resides in the nucleoplasm. Its function is as follows. Involved in pre-mRNA splicing. May induce cell death, possibly by acting on the transcription and RNA processing of apoptosis-related factors. This Rattus norvegicus (Rat) protein is Cyclin-L2 (Ccnl2).